Here is a 297-residue protein sequence, read N- to C-terminus: uncharacterized protein (297 aa).

7 helical membrane-spanning segments follow: residues Leu14–Phe34, Leu55–Phe75, Phe81–Leu101, Ala110–Phe130, Leu135–Phe155, Ile163–Ile183, and Leu208–Phe228.

The protein localises to the cell membrane. This is an uncharacterized protein from Methanocaldococcus jannaschii (strain ATCC 43067 / DSM 2661 / JAL-1 / JCM 10045 / NBRC 100440) (Methanococcus jannaschii).